A 347-amino-acid polypeptide reads, in one-letter code: MVLVHVGYLVLPVFGSVRNRGAPFQRSQHPHATSCRHFHLGPPQPQQLAPDFPLAHPVQSQPGLSAHMAPAHQHSGTLHQSLTPLPTLQFQDVTGPSFLPQALHQQYLLQQQLLEAQHRRLVSHPRRNQDRVSVHPHRLHPSFDFGHQLQTPQPRYLAEGTDWDLSVDAGLSPAQFQVRPIPQHYQHYLATPRMHHFPRNSSSTQMVVHEIRNYPYPQLHFLALQGLNPSRHTSAVRESYEELLQLEDRLGNVTRGAVQNTIERFTFPHKYKKRRPQDSKGKKDEGEESDTDEKCTICLSMLEDGEDVRRLPCMHLFHQLCVDQWLAMSKKCPICRVDIETQLGADS.

Disordered stretches follow at residues 23–79 and 268–289; these read PFQR…GTLH and PHKY…GEES. Residues 267–269 are ubiquitin binding; the sequence is FPH. Over residues 276–285 the composition is skewed to basic and acidic residues; that stretch reads PQDSKGKKDE. 2 residues coordinate Zn(2+): C295 and C298. The RING-type; atypical zinc-finger motif lies at 295–336; the sequence is CTICLSMLEDGEDVRRLPCMHLFHQLCVDQWLAMSKKCPICR. Residues 310 to 314 form a ubiquitin binding region; the sequence is RLPCM. Zn(2+) contacts are provided by H318 and C321.

This sequence belongs to the Arkadia family. Monomer; binding to the ubiquitin-conjugating enzyme E2 does not trigger homodimerization. In terms of tissue distribution, expressed in neurons of the nervous system.

The protein resides in the nucleus. The catalysed reaction is S-ubiquitinyl-[E2 ubiquitin-conjugating enzyme]-L-cysteine + [acceptor protein]-L-lysine = [E2 ubiquitin-conjugating enzyme]-L-cysteine + N(6)-ubiquitinyl-[acceptor protein]-L-lysine.. Its activity is regulated as follows. Binds free ubiquitin non-covalently via its RING-type zinc finger. Ubiquitin-binding leads to enhance the E3 ubiquitin-protein ligase activity by stabilizing the ubiquitin-conjugating enzyme E2 (donor ubiquitin) in the 'closed' conformation and activating ubiquitin transfer. Its function is as follows. E3 ubiquitin-protein ligase that acts as a regulator of motor axon elongation. Required for efficient motor axon extension in the dorsal forelimb by enhancing the transcriptional responses of the SMAD1/SMAD5/SMAD8 effectors, which are activated downstream of BMP. Acts by mediating ubiquitination and degradation of SMAD inhibitors such as SMAD6, SMAD7, SKI and SNON isoform of SKIL. This is E3 ubiquitin-protein ligase ARK2C from Mus musculus (Mouse).